Here is a 469-residue protein sequence, read N- to C-terminus: 3-isopropylmalate dehydratase large subunit (469 aa).

3 residues coordinate [4Fe-4S] cluster: C347, C408, and C411.

It belongs to the aconitase/IPM isomerase family. LeuC type 1 subfamily. In terms of assembly, heterodimer of LeuC and LeuD. Requires [4Fe-4S] cluster as cofactor.

The enzyme catalyses (2R,3S)-3-isopropylmalate = (2S)-2-isopropylmalate. Its pathway is amino-acid biosynthesis; L-leucine biosynthesis; L-leucine from 3-methyl-2-oxobutanoate: step 2/4. Catalyzes the isomerization between 2-isopropylmalate and 3-isopropylmalate, via the formation of 2-isopropylmaleate. In Haemophilus influenzae (strain PittEE), this protein is 3-isopropylmalate dehydratase large subunit.